Here is a 1155-residue protein sequence, read N- to C-terminus: Polarized growth protein rax2 (1155 aa).

Positions 1 to 27 are cleaved as a signal peptide; the sequence is MAIYSSFWIRLYFTFRFFCYFLTSVVA. Residues 28-1105 are Extracellular-facing; it reads SDVSFLGDFS…KYDHIGQPRY (1078 aa). Asn-44, Asn-61, Asn-103, Asn-118, Asn-124, Asn-156, Asn-161, Asn-182, Asn-190, Asn-213, Asn-224, Asn-306, Asn-391, Asn-413, Asn-419, Asn-510, Asn-519, Asn-554, Asn-562, Asn-607, Asn-630, Asn-713, Asn-722, Asn-743, Asn-769, Asn-793, Asn-807, Asn-824, Asn-840, Asn-848, Asn-876, Asn-893, Asn-899, Asn-916, Asn-945, Asn-1009, Asn-1030, and Asn-1055 each carry an N-linked (GlcNAc...) asparagine glycan. The helical transmembrane segment at 1106–1126 threads the bilayer; the sequence is VVIISLGISIGVMFLIMSGSI. The Cytoplasmic portion of the chain corresponds to 1127 to 1155; sequence VVEIIHWFFSEHVETLHDYSNFLKELKTQ.

The protein belongs to the RAX2 family. As to quaternary structure, interacts with for3 and tea1.

The protein localises to the cell membrane. Functionally, controls cell polarity, through the G1 phase of mitosis, via regulation of for3 localization. Required for actin cable formation where it directs the spatial distribution of the actin cables. The protein is Polarized growth protein rax2 of Schizosaccharomyces pombe (strain 972 / ATCC 24843) (Fission yeast).